A 152-amino-acid polypeptide reads, in one-letter code: D-aminoacyl-tRNA deacylase (152 aa).

The Gly-cisPro motif, important for rejection of L-amino acids signature appears at 142–143 (GP).

It belongs to the DTD family. Homodimer.

It localises to the cytoplasm. It catalyses the reaction glycyl-tRNA(Ala) + H2O = tRNA(Ala) + glycine + H(+). It carries out the reaction a D-aminoacyl-tRNA + H2O = a tRNA + a D-alpha-amino acid + H(+). Functionally, an aminoacyl-tRNA editing enzyme that deacylates mischarged D-aminoacyl-tRNAs. Also deacylates mischarged glycyl-tRNA(Ala), protecting cells against glycine mischarging by AlaRS. Acts via tRNA-based rather than protein-based catalysis; rejects L-amino acids rather than detecting D-amino acids in the active site. By recycling D-aminoacyl-tRNA to D-amino acids and free tRNA molecules, this enzyme counteracts the toxicity associated with the formation of D-aminoacyl-tRNA entities in vivo and helps enforce protein L-homochirality. The protein is D-aminoacyl-tRNA deacylase of Burkholderia cenocepacia (strain HI2424).